Consider the following 445-residue polypeptide: MAPTPELSPETLARHLAVLGPASGYCVAYSGGLDSTVLLHLMAALSAARELPLRAVHIHHGLQPQADAWAEHCRQQAAALGVDCLVLPVEVRRDSGEGLEAAARQARYAALASHLQSGEALLTAHHADDQAETVLLHLLRGSGPRGLAGMRAQRPLGRGRLLRPLLPWPRERLRAYGDTHALCWVEDPSNAHVAHDRNWLRHTLWPVLTQRWPDASRRVGRAAGEQAEAEALLRELAGEDLARHPPGPGLAVSVLARLSPARARNLVRHWLLMSGLRPPPRARLEQGLADLIRAGRDRQPVLTWPEGELRRYRDRIHRLPAGGPPPWPGPDREWDLRVPLVVPGVGVLRLVRADEGIAPSLIGAEGLSVGRRRRGERCQLAHDPGHRPLSKRFQEAGIPPWERDRVPILRRGEEVVAIANLGTAKRFTARPGYRLICEEHGPDGG.

30–35 is a binding site for ATP; the sequence is SGGLDS.

It belongs to the tRNA(Ile)-lysidine synthase family.

It is found in the cytoplasm. It carries out the reaction cytidine(34) in tRNA(Ile2) + L-lysine + ATP = lysidine(34) in tRNA(Ile2) + AMP + diphosphate + H(+). In terms of biological role, ligates lysine onto the cytidine present at position 34 of the AUA codon-specific tRNA(Ile) that contains the anticodon CAU, in an ATP-dependent manner. Cytidine is converted to lysidine, thus changing the amino acid specificity of the tRNA from methionine to isoleucine. The sequence is that of tRNA(Ile)-lysidine synthase from Alkalilimnicola ehrlichii (strain ATCC BAA-1101 / DSM 17681 / MLHE-1).